Reading from the N-terminus, the 661-residue chain is Transketolase (661 aa).

Residue S2 is modified to N-acetylserine. H31 is a binding site for substrate. Thiamine diphosphate is bound by residues H71 and 119-121 (GPL). Residue D160 participates in Mg(2+) binding. Thiamine diphosphate-binding residues include G161 and N190. Mg(2+)-binding residues include N190 and V192. Residues H267, R359, and S386 each coordinate substrate. H267 is a binding site for thiamine diphosphate. The active-site Proton donor is E413. Position 439 (F439) interacts with thiamine diphosphate. H463, D471, and R522 together coordinate substrate.

The protein belongs to the transketolase family. In terms of assembly, homodimer. The cofactor is Mg(2+). Ca(2+) is required as a cofactor. Requires Mn(2+) as cofactor. Co(2+) serves as cofactor. It depends on thiamine diphosphate as a cofactor.

The catalysed reaction is D-sedoheptulose 7-phosphate + D-glyceraldehyde 3-phosphate = aldehydo-D-ribose 5-phosphate + D-xylulose 5-phosphate. Catalyzes the transfer of a two-carbon ketol group from a ketose donor to an aldose acceptor, via a covalent intermediate with the cofactor thiamine pyrophosphate. The protein is Transketolase (tkt-1) of Dictyostelium discoideum (Social amoeba).